We begin with the raw amino-acid sequence, 365 residues long: F-box protein At1g48060 (365 aa).

A disordered region spans residues 1–20; it reads MKPQEEEEKNENMARKRSKS. The region spanning 20-69 is the F-box domain; sequence SSSSLSIPLDIATDIFLRLPAKSVVRFSCVAKHWSSITTAPYFTNSFETR.

The sequence is that of F-box protein At1g48060 from Arabidopsis thaliana (Mouse-ear cress).